A 204-amino-acid chain; its full sequence is High frequency lysogenization protein HflD homolog (204 aa).

It belongs to the HflD family.

The protein resides in the cytoplasm. The protein localises to the cell inner membrane. This is High frequency lysogenization protein HflD homolog from Xylella fastidiosa (strain M23).